The primary structure comprises 196 residues: Imidazole glycerol phosphate synthase subunit HisH (196 aa).

Residues 2-196 (DVVILDTGCA…AQLMKNFLEM (195 aa)) form the Glutamine amidotransferase type-1 domain. Cys77 serves as the catalytic Nucleophile. Catalysis depends on residues His178 and Glu180.

Heterodimer of HisH and HisF.

It is found in the cytoplasm. It catalyses the reaction 5-[(5-phospho-1-deoxy-D-ribulos-1-ylimino)methylamino]-1-(5-phospho-beta-D-ribosyl)imidazole-4-carboxamide + L-glutamine = D-erythro-1-(imidazol-4-yl)glycerol 3-phosphate + 5-amino-1-(5-phospho-beta-D-ribosyl)imidazole-4-carboxamide + L-glutamate + H(+). It carries out the reaction L-glutamine + H2O = L-glutamate + NH4(+). It participates in amino-acid biosynthesis; L-histidine biosynthesis; L-histidine from 5-phospho-alpha-D-ribose 1-diphosphate: step 5/9. Its function is as follows. IGPS catalyzes the conversion of PRFAR and glutamine to IGP, AICAR and glutamate. The HisH subunit catalyzes the hydrolysis of glutamine to glutamate and ammonia as part of the synthesis of IGP and AICAR. The resulting ammonia molecule is channeled to the active site of HisF. This is Imidazole glycerol phosphate synthase subunit HisH from Yersinia pestis.